The chain runs to 248 residues: MAGHSKWANIKHRKERQDAKKGKIFTKLIRELTVAARQGGGVPADNPRLRLAVDKALTANMTRDTIDRAIARGVGSNDADNMVELSYEGYAPSGVAIIVEAMTDNRNRTAAEVRHAFSKCGGNLGTDGSVAYMFERKGQISFAPGVDEEALMDAALEAGADDVVVNDDGSIDVFTTFADFISVNEALAAAGFKGDEAEVTMIPSTTATLDLETAQKVLKLIDMLEDLDDVQNVYSNADIPDDVMAQLG.

This sequence belongs to the TACO1 family.

The protein localises to the cytoplasm. This chain is Probable transcriptional regulatory protein PLES_43501, found in Pseudomonas aeruginosa (strain LESB58).